Reading from the N-terminus, the 559-residue chain is Chromatin assembly factor 1 subunit B (559 aa).

WD repeat units lie at residues 11 to 54, 64 to 103, 127 to 166, 169 to 208, 228 to 279, 299 to 340, and 344 to 385; these read HNKE…DGKA, RHTK…EPEQ, GHLE…KISI, EHKS…VAFN, FHDD…RPIA, ELRP…PFGY, and IHYH…IPLK. The tract at residues 386–559 is disordered; the sequence is EKPVLNMRTP…NKGGTESLDP (174 aa). Thr394 carries the phosphothreonine modification. Ser409 carries the phosphoserine modification. A Phosphothreonine modification is found at Thr419. Position 429 is a phosphoserine (Ser429). The segment covering 430 to 444 has biased composition (low complexity); the sequence is PGTTPPQARQAPAPT. Phosphothreonine is present on Thr433. Position 458 is a phosphoserine (Ser458). Positions 469–495 are enriched in polar residues; that stretch reads LQPSSQNTKAHPSRRVTLNTLQAWSKT. Lys494 is subject to N6-acetyllysine. Phosphothreonine occurs at positions 495, 509, 521, and 531. Positions 509–526 are enriched in low complexity; it reads TPPSSVPTSVISTPSTEE. Ser538 is subject to Phosphoserine. The segment covering 541–552 has biased composition (basic and acidic residues); that stretch reads ELKRPRLDENKG.

This sequence belongs to the WD repeat HIR1 family. In terms of assembly, subunit of the CAF-1 complex that contains RBBP4, CHAF1B and CHAF1A. CHAF1A binds directly to CHAF1B. Only minor amounts of RBBP4 are complexed with CHAF1A and CHAF1B in G1 phase. In G2 and S phase also monomeric CHAF1B is detected. Interacts with histones H3.1, H3.2 and H3.1t. Differentially phosphorylated during cell cycle. During mitosis the p60 subunit of inactive CAF-1 is hyperphosphorylated and displaced into the cytosol. Progressivly dephosphorylated from G1 to S and G2 phase. Phosphorylated p60 is recruited to chromatin undergoing DNA repair after UV irradiation in G1, S or G2 phases.

Its subcellular location is the nucleus. It localises to the cytoplasm. Its function is as follows. Acts as a component of the histone chaperone complex chromatin assembly factor 1 (CAF-1), which assembles histone octamers onto DNA during replication and repair. CAF-1 performs the first step of the nucleosome assembly process, bringing newly synthesized histones H3 and H4 to replicating DNA; histones H2A/H2B can bind to this chromatin precursor subsequent to DNA replication to complete the histone octamer. The chain is Chromatin assembly factor 1 subunit B from Homo sapiens (Human).